Consider the following 424-residue polypeptide: 2,3-bisphosphoglycerate-independent phosphoglycerate mutase (424 aa).

The protein belongs to the BPG-independent phosphoglycerate mutase family. A-PGAM subfamily.

The enzyme catalyses (2R)-2-phosphoglycerate = (2R)-3-phosphoglycerate. It functions in the pathway carbohydrate degradation; glycolysis; pyruvate from D-glyceraldehyde 3-phosphate: step 3/5. Catalyzes the interconversion of 2-phosphoglycerate and 3-phosphoglycerate. The sequence is that of 2,3-bisphosphoglycerate-independent phosphoglycerate mutase from Aeropyrum pernix (strain ATCC 700893 / DSM 11879 / JCM 9820 / NBRC 100138 / K1).